A 400-amino-acid polypeptide reads, in one-letter code: Glycine betaine/proline betaine transport system ATP-binding protein ProV (400 aa).

One can recognise an ABC transporter domain in the interval 29-265 (LSKEQILEKT…PANDYVRTFF (237 aa)). 61–68 (GLSGSGKS) contributes to the ATP binding site. 2 consecutive CBS domains span residues 282–341 (RTPN…GLDA) and 343–400 (LIDA…VNNG).

This sequence belongs to the ABC transporter superfamily. As to quaternary structure, the complex is composed of two ATP-binding proteins (ProV), two transmembrane proteins (ProW) and a solute-binding protein (ProX).

The protein resides in the cell inner membrane. Part of the ProU ABC transporter complex involved in glycine betaine and proline betaine uptake. Probably responsible for energy coupling to the transport system. In Escherichia coli (strain K12), this protein is Glycine betaine/proline betaine transport system ATP-binding protein ProV.